We begin with the raw amino-acid sequence, 209 residues long: Uracil phosphoribosyltransferase (209 aa).

5-phospho-alpha-D-ribose 1-diphosphate is bound by residues Arg-79, Arg-104, and 131-139; that span reads DPMLATGGS. Residues Ile-194 and 199–201 each bind uracil; that span reads GDA. Position 200 (Asp-200) interacts with 5-phospho-alpha-D-ribose 1-diphosphate.

Belongs to the UPRTase family. Mg(2+) serves as cofactor.

The catalysed reaction is UMP + diphosphate = 5-phospho-alpha-D-ribose 1-diphosphate + uracil. It participates in pyrimidine metabolism; UMP biosynthesis via salvage pathway; UMP from uracil: step 1/1. Its activity is regulated as follows. Allosterically activated by GTP. In terms of biological role, catalyzes the conversion of uracil and 5-phospho-alpha-D-ribose 1-diphosphate (PRPP) to UMP and diphosphate. This is Uracil phosphoribosyltransferase from Alkaliphilus metalliredigens (strain QYMF).